Consider the following 677-residue polypeptide: MSDNDSRRRLADLNAQLKLHDVLYHEHDAPEISDAQYDALVQEKRELLEKFPELSAYNDYEGVIGALTVDARLPKIAHREPMLSLENSFTIQDVEKFISRVKRSLNMDPEVSITIACEPKIDGLSFAALYEKGSLIRVATRGNGHLGEDITNTAKVIRKLPHKIANAPEVLEVRGEIYMHHSDFEKLKDVCNFANPRNAAAGSIRQLNPKIAEERNLRYVAYCIVNSALASQEAILKQLAEWGFCTHTEVLFADNMDDALSFHTRMYNTRSTLGYDIDGIVYKVNDTHLQKLLGSTSKYPRWATAHKFPSTEAITKLRDISVQVGRTGVITPIAELEPINIGGTLVSRASLHNLNEIARKDIRIGDSVIVKRAGEVIPQVVGVDHTARCNSAVPEEYVFPSHCPSCGSTLSRAPGEVAMRCTAELSCQAQVLERVKHFVSRDGLNIVGLGEKQIEFFCNASYISNVADIFSLREKISHMNLSAEHGWGEKSIALLINAINASTTVKLSNFIFALGIRFIGKGAAKLIAEHYRSYSAWVRAMTSLANGEDPDNIHGIGLKSIESLRAFFSSEDNLRVLQTLEEKLNILNEIANTETASPISGKTIVFTGVLEDMSRNEAAKYAETLGAKVGNTVTTKTDILVAGSNSGSKLDTARKLGIQVMNESEWKDLLKTVSNSE.

NAD(+)-binding positions include 34 to 38, 84 to 85, and Glu118; these read DAQYD and SL. Lys120 acts as the N6-AMP-lysine intermediate in catalysis. Residues Arg141, Glu176, Lys283, and Lys307 each contribute to the NAD(+) site. The Zn(2+) site is built by Cys403, Cys406, Cys421, and Cys427. The region spanning 594 to 677 is the BRCT domain; sequence ETASPISGKT…DLLKTVSNSE (84 aa).

The protein belongs to the NAD-dependent DNA ligase family. LigA subfamily. Mg(2+) is required as a cofactor. It depends on Mn(2+) as a cofactor.

It carries out the reaction NAD(+) + (deoxyribonucleotide)n-3'-hydroxyl + 5'-phospho-(deoxyribonucleotide)m = (deoxyribonucleotide)n+m + AMP + beta-nicotinamide D-nucleotide.. Its function is as follows. DNA ligase that catalyzes the formation of phosphodiester linkages between 5'-phosphoryl and 3'-hydroxyl groups in double-stranded DNA using NAD as a coenzyme and as the energy source for the reaction. It is essential for DNA replication and repair of damaged DNA. This is DNA ligase from Anaplasma phagocytophilum (strain HZ).